We begin with the raw amino-acid sequence, 172 residues long: Large ribosomal subunit protein uL10 (172 aa).

The protein belongs to the universal ribosomal protein uL10 family. As to quaternary structure, part of the ribosomal stalk of the 50S ribosomal subunit. The N-terminus interacts with L11 and the large rRNA to form the base of the stalk. The C-terminus forms an elongated spine to which L12 dimers bind in a sequential fashion forming a multimeric L10(L12)X complex.

Forms part of the ribosomal stalk, playing a central role in the interaction of the ribosome with GTP-bound translation factors. This is Large ribosomal subunit protein uL10 from Chelativorans sp. (strain BNC1).